The primary structure comprises 412 residues: Glutamate-1-semialdehyde 2,1-aminomutase (412 aa).

At lysine 260 the chain carries N6-(pyridoxal phosphate)lysine.

Belongs to the class-III pyridoxal-phosphate-dependent aminotransferase family. HemL subfamily. Pyridoxal 5'-phosphate is required as a cofactor.

It is found in the cytoplasm. It carries out the reaction (S)-4-amino-5-oxopentanoate = 5-aminolevulinate. It participates in porphyrin-containing compound metabolism; protoporphyrin-IX biosynthesis; 5-aminolevulinate from L-glutamyl-tRNA(Glu): step 2/2. The chain is Glutamate-1-semialdehyde 2,1-aminomutase from Methanocorpusculum labreanum (strain ATCC 43576 / DSM 4855 / Z).